Consider the following 844-residue polypeptide: Beta-mannosidase B (844 aa).

The active-site Proton donor is the Glu-432. N-linked (GlcNAc...) asparagine glycosylation is present at Asn-723.

Belongs to the glycosyl hydrolase 2 family. Beta-mannosidase B subfamily.

It carries out the reaction Hydrolysis of terminal, non-reducing beta-D-mannose residues in beta-D-mannosides.. It participates in glycan metabolism; N-glycan degradation. Exoglycosidase that cleaves the single beta-linked mannose residue from the non-reducing end of beta-mannosidic oligosaccharides of various complexity and length. Prefers mannobiose over mannotriose and has no activity against polymeric mannan. Is also severely restricted by galactosyl substitutions at the +1 subsite. This chain is Beta-mannosidase B (mndB), found in Aspergillus niger (strain ATCC MYA-4892 / CBS 513.88 / FGSC A1513).